The following is a 195-amino-acid chain: Imidazoleglycerol-phosphate dehydratase (195 aa).

Belongs to the imidazoleglycerol-phosphate dehydratase family.

It is found in the cytoplasm. The enzyme catalyses D-erythro-1-(imidazol-4-yl)glycerol 3-phosphate = 3-(imidazol-4-yl)-2-oxopropyl phosphate + H2O. The protein operates within amino-acid biosynthesis; L-histidine biosynthesis; L-histidine from 5-phospho-alpha-D-ribose 1-diphosphate: step 6/9. This is Imidazoleglycerol-phosphate dehydratase from Ruegeria pomeroyi (strain ATCC 700808 / DSM 15171 / DSS-3) (Silicibacter pomeroyi).